The following is a 103-amino-acid chain: Mitochondrial import inner membrane translocase subunit Tim10 B (103 aa).

The short motif at 28-52 (CFQRCVPSLHHRALDAEEEACLHSC) is the Twin CX3C motif element. 2 cysteine pairs are disulfide-bonded: Cys28–Cys52 and Cys32–Cys48.

This sequence belongs to the small Tim family. As to quaternary structure, component of the TIM22 complex, which core is composed of TIMM22, associated with TIMM10 (TIMM10A and/or TIMM10B), TIMM9, AGK and TIMM29. As to expression, ubiquitous, with highest expression in heart, kidney, liver and skeletal muscle.

The protein resides in the mitochondrion inner membrane. Functionally, component of the TIM22 complex, a complex that mediates the import and insertion of multi-pass transmembrane proteins into the mitochondrial inner membrane. The TIM22 complex forms a twin-pore translocase that uses the membrane potential as the external driving force. In the TIM22 complex, it may act as a docking point for the soluble 70 kDa complex that guides the target proteins in transit through the aqueous mitochondrial intermembrane space. The chain is Mitochondrial import inner membrane translocase subunit Tim10 B (TIMM10B) from Homo sapiens (Human).